We begin with the raw amino-acid sequence, 194 residues long: PRELI domain containing protein 3B (194 aa).

Residues 1–172 form the PRELI/MSF1 domain; that stretch reads MKIWTSEHVF…VIHKLNAEIE (172 aa). S46 and S51 each carry phosphoserine.

Belongs to the slowmo family.

In Macaca fascicularis (Crab-eating macaque), this protein is PRELI domain containing protein 3B (PRELID3B).